The primary structure comprises 313 residues: 4-hydroxy-3-methylbut-2-enyl diphosphate reductase (313 aa).

Cysteine 12 serves as a coordination point for [4Fe-4S] cluster. The (2E)-4-hydroxy-3-methylbut-2-enyl diphosphate site is built by histidine 41 and histidine 74. 2 residues coordinate dimethylallyl diphosphate: histidine 41 and histidine 74. Isopentenyl diphosphate-binding residues include histidine 41 and histidine 74. Cysteine 96 provides a ligand contact to [4Fe-4S] cluster. Position 124 (histidine 124) interacts with (2E)-4-hydroxy-3-methylbut-2-enyl diphosphate. Residue histidine 124 participates in dimethylallyl diphosphate binding. Histidine 124 provides a ligand contact to isopentenyl diphosphate. The active-site Proton donor is glutamate 126. Threonine 167 contacts (2E)-4-hydroxy-3-methylbut-2-enyl diphosphate. Cysteine 197 is a binding site for [4Fe-4S] cluster. (2E)-4-hydroxy-3-methylbut-2-enyl diphosphate-binding residues include serine 225, serine 226, asparagine 227, and serine 269. Dimethylallyl diphosphate-binding residues include serine 225, serine 226, asparagine 227, and serine 269. Isopentenyl diphosphate-binding residues include serine 225, serine 226, asparagine 227, and serine 269.

It belongs to the IspH family. It depends on [4Fe-4S] cluster as a cofactor.

It catalyses the reaction isopentenyl diphosphate + 2 oxidized [2Fe-2S]-[ferredoxin] + H2O = (2E)-4-hydroxy-3-methylbut-2-enyl diphosphate + 2 reduced [2Fe-2S]-[ferredoxin] + 2 H(+). The enzyme catalyses dimethylallyl diphosphate + 2 oxidized [2Fe-2S]-[ferredoxin] + H2O = (2E)-4-hydroxy-3-methylbut-2-enyl diphosphate + 2 reduced [2Fe-2S]-[ferredoxin] + 2 H(+). The protein operates within isoprenoid biosynthesis; dimethylallyl diphosphate biosynthesis; dimethylallyl diphosphate from (2E)-4-hydroxy-3-methylbutenyl diphosphate: step 1/1. It participates in isoprenoid biosynthesis; isopentenyl diphosphate biosynthesis via DXP pathway; isopentenyl diphosphate from 1-deoxy-D-xylulose 5-phosphate: step 6/6. Its function is as follows. Catalyzes the conversion of 1-hydroxy-2-methyl-2-(E)-butenyl 4-diphosphate (HMBPP) into a mixture of isopentenyl diphosphate (IPP) and dimethylallyl diphosphate (DMAPP). Acts in the terminal step of the DOXP/MEP pathway for isoprenoid precursor biosynthesis. The sequence is that of 4-hydroxy-3-methylbut-2-enyl diphosphate reductase from Methylococcus capsulatus (strain ATCC 33009 / NCIMB 11132 / Bath).